A 349-amino-acid polypeptide reads, in one-letter code: Cbb3-type cytochrome c oxidase subunit CcoP (349 aa).

The segment at 1 to 67 is disordered; that stretch reads MADTDDEHAS…RVVRDRKGGR (67 aa). Over 1–96 the chain is Cytoplasmic; that stretch reads MADTDDEHAS…NPLPRWWLWT (96 aa). Residues 16–30 show a composition bias toward basic and acidic residues; sequence NRIELERQAADEAHK. The chain crosses the membrane as a helical span at residues 97–117; it reads FYATIVWGVLYLIAYPAIPLV. The Periplasmic segment spans residues 118–349; that stretch reads NGATQGLLGQ…AYVHSLGGGE (232 aa). Cytochrome c domains follow at residues 168–258 and 265–346; these read YTAN…LELG and ALAA…HSLG. Heme c-binding residues include Cys-181, Cys-184, His-185, Met-233, Cys-278, Cys-281, His-282, and Met-323.

Belongs to the CcoP / FixP family. Component of the cbb3-type cytochrome c oxidase at least composed of CcoN, CcoO, CcoQ and CcoP. The cofactor is heme c.

It localises to the cell inner membrane. It participates in energy metabolism; oxidative phosphorylation. In terms of biological role, C-type cytochrome. Part of the cbb3-type cytochrome c oxidase complex. CcoP subunit is required for transferring electrons from donor cytochrome c via its heme groups to CcoO subunit. From there, electrons are shuttled to the catalytic binuclear center of CcoN subunit where oxygen reduction takes place. The complex also functions as a proton pump. The chain is Cbb3-type cytochrome c oxidase subunit CcoP from Paracoccus denitrificans (strain Pd 1222).